The primary structure comprises 133 residues: Small ribosomal subunit protein bS18 (133 aa).

The disordered stretch occupies residues 1 to 63 (MARPDMGGPK…GDEGGGRRGF (63 aa)). Residues 9 to 39 (PKTGGFGGPRSGGFGGGGGGGFGGGGFGGGR) show a composition bias toward gly residues. Over residues 40–59 (GGDRGDRGDRDDRGGDEGGG) the composition is skewed to basic and acidic residues.

It belongs to the bacterial ribosomal protein bS18 family. In terms of assembly, part of the 30S ribosomal subunit. Forms a tight heterodimer with protein bS6.

Its function is as follows. Binds as a heterodimer with protein bS6 to the central domain of the 16S rRNA, where it helps stabilize the platform of the 30S subunit. This Anaeromyxobacter dehalogenans (strain 2CP-1 / ATCC BAA-258) protein is Small ribosomal subunit protein bS18.